We begin with the raw amino-acid sequence, 381 residues long: E3 ubiquitin-protein ligase RNF13 (381 aa).

The signal sequence occupies residues 1-34 (MLLSIGMLMLSATQIYTIVTVQLFAFLNLLPVEA). Topologically, residues 35–182 (DILAYNFENG…IPEFSLPLEY (148 aa)) are lumenal. The region spanning 64-160 (LKGFLINSKP…GEASANSLKE (97 aa)) is the PA domain. The N-linked (GlcNAc...) asparagine glycan is linked to asparagine 88. A helical membrane pass occupies residues 183 to 203 (YLIPFLIIVGICLILIVIFMI). Over 204–381 (TKFVQDRHRA…ERDYRVTNTV (178 aa)) the chain is Cytoplasmic. An RING-type; atypical zinc finger spans residues 240–282 (CAICLDEYEDGDKLRILPCSHAYHCKCVDPWLTKTKKTCPVCK). The interval 285–381 (VVPSQGDSDS…ERDYRVTNTV (97 aa)) is disordered. 2 stretches are compositionally biased toward acidic residues: residues 292–305 (SDSE…ENEV) and 339–353 (SEYE…DSSD). A compositionally biased stretch (basic and acidic residues) spans 370–381 (NDERDYRVTNTV).

Widely expressed (at protein level). Lowest levels in the liver, moderate levels in the heart, intestine and spleen, and high levels in skeletal muscle, kidney, proventriculus and brain. Also expressed in inner ear after noise exposure.

The protein localises to the endoplasmic reticulum membrane. Its subcellular location is the late endosome membrane. It is found in the lysosome membrane. It localises to the nucleus inner membrane. The enzyme catalyses S-ubiquitinyl-[E2 ubiquitin-conjugating enzyme]-L-cysteine + [acceptor protein]-L-lysine = [E2 ubiquitin-conjugating enzyme]-L-cysteine + N(6)-ubiquitinyl-[acceptor protein]-L-lysine.. It participates in protein modification; protein ubiquitination. In terms of biological role, E3 ubiquitin-protein ligase that regulates cell proliferation. Involved in apoptosis regulation. Mediates ER stress-induced activation of JNK signaling pathway and apoptosis by promoting ERN1 activation and splicing of XBP1 mRNA. The polypeptide is E3 ubiquitin-protein ligase RNF13 (Gallus gallus (Chicken)).